The following is a 449-amino-acid chain: uncharacterized protein (449 aa).

The region spanning 3–61 (VWQQGATIELRIDSLSHTGEGVGRWQDRVVFVADTVPGDRLRVRLTHVKRQYAHGKVLE) is the TRAM domain. [4Fe-4S] cluster-binding residues include Cys-74, Cys-80, Cys-83, and Cys-161. S-adenosyl-L-methionine contacts are provided by Gln-283, Tyr-312, Glu-333, and Asp-378. Cys-405 acts as the Nucleophile in catalysis.

It belongs to the class I-like SAM-binding methyltransferase superfamily. RNA M5U methyltransferase family.

This is an uncharacterized protein from Thermosynechococcus vestitus (strain NIES-2133 / IAM M-273 / BP-1).